We begin with the raw amino-acid sequence, 200 residues long: Formate dehydrogenase iron-sulfur subunit (200 aa).

4Fe-4S ferredoxin-type domains lie at 7-37, 50-81, and 82-111; these read VKFY…VGVN, GKEK…VRAD, and GIVL…FPKS. The [4Fe-4S] cluster site is built by cysteine 16, cysteine 19, cysteine 22, cysteine 26, cysteine 59, cysteine 62, cysteine 67, cysteine 71, cysteine 91, cysteine 94, cysteine 97, cysteine 101, cysteine 123, cysteine 126, cysteine 155, and cysteine 159.

As to quaternary structure, formate dehydrogenase is a membrane-bound complex, formed of at least three different subunits. It depends on [4Fe-4S] cluster as a cofactor.

This chain is an electron transfer unit containing 18 cysteine residues, 16 of which occur in four clusters. This Wolinella succinogenes (strain ATCC 29543 / DSM 1740 / CCUG 13145 / JCM 31913 / LMG 7466 / NCTC 11488 / FDC 602W) (Vibrio succinogenes) protein is Formate dehydrogenase iron-sulfur subunit (fdhB1).